Reading from the N-terminus, the 58-residue chain is Sperm protamine P1 (58 aa).

The segment at 1 to 58 (MARYRRRSRSRSRSRYGRRRRRSRSRRRRSRRRRRRRGRRGRGYHRRSPHRRRRRRRR) is disordered.

This sequence belongs to the protamine P1 family. In terms of tissue distribution, testis.

The protein localises to the nucleus. The protein resides in the chromosome. Functionally, protamines substitute for histones in the chromatin of sperm during the haploid phase of spermatogenesis. They compact sperm DNA into a highly condensed, stable and inactive complex. This is Sperm protamine P1 (PRM1) from Monodelphis domestica (Gray short-tailed opossum).